The sequence spans 106 residues: Pyrimidine/purine nucleoside phosphorylase (106 aa).

The protein belongs to the nucleoside phosphorylase PpnP family.

It catalyses the reaction a purine D-ribonucleoside + phosphate = a purine nucleobase + alpha-D-ribose 1-phosphate. The catalysed reaction is adenosine + phosphate = alpha-D-ribose 1-phosphate + adenine. It carries out the reaction cytidine + phosphate = cytosine + alpha-D-ribose 1-phosphate. The enzyme catalyses guanosine + phosphate = alpha-D-ribose 1-phosphate + guanine. It catalyses the reaction inosine + phosphate = alpha-D-ribose 1-phosphate + hypoxanthine. The catalysed reaction is thymidine + phosphate = 2-deoxy-alpha-D-ribose 1-phosphate + thymine. It carries out the reaction uridine + phosphate = alpha-D-ribose 1-phosphate + uracil. The enzyme catalyses xanthosine + phosphate = alpha-D-ribose 1-phosphate + xanthine. Functionally, catalyzes the phosphorolysis of diverse nucleosides, yielding D-ribose 1-phosphate and the respective free bases. Can use uridine, adenosine, guanosine, cytidine, thymidine, inosine and xanthosine as substrates. Also catalyzes the reverse reactions. The polypeptide is Pyrimidine/purine nucleoside phosphorylase (Burkholderia multivorans (strain ATCC 17616 / 249)).